We begin with the raw amino-acid sequence, 480 residues long: Alpha-glucosidase (480 aa).

4–70 provides a ligand contact to NAD(+); that stretch reads VKIGIIGAGS…ADLKFEKTTS (67 aa). 2 residues coordinate substrate: D119 and N153. C174 contacts Mn(2+). H175 (proton donor) is an active-site residue. Position 203 (H203) interacts with Mn(2+). D260 (proton acceptor) is an active-site residue.

Belongs to the glycosyl hydrolase 4 family. As to quaternary structure, homodimer. NAD(+) is required as a cofactor. Requires Mn(2+) as cofactor.

The catalysed reaction is Hydrolysis of terminal, non-reducing (1-&gt;4)-linked alpha-D-glucose residues with release of alpha-D-glucose.. With respect to regulation, inhibited by EDTA in vitro. Is able to hydrolyze diverse types of alpha-glycoside bonds in di- and trisaccharides: alpha-1,4 bonds of maltose and maltotriose, alpha-1,1 bonds of trehalose, alpha-1,2 bonds of sucrose, alpha-1,3 bonds of turanose and melizitose, alpha-1,6 bonds of isomaltose and melibiose. AglA is not specific with respect to the configuration at the C-4 position of its substrates because it also possesses alpha-galactosidase activity. Acts on the substrate from the non-reducing end of the chain. The activity of AglA drops with increasing length of the saccharide chain. Does not hydrolyze alpha-, beta-, and gamma-cyclodextrins or polysaccharides (starch, pullulan, amylose, amylopectin, glycogen). Does not cleave beta-glycosidic bonds in di-, oligo-, or polysaccharides. In Thermotoga neapolitana, this protein is Alpha-glucosidase (aglA).